The chain runs to 249 residues: GTP cyclohydrolase 1 type 2 homolog (249 aa).

A divalent metal cation is bound by residues H64, H65, D102, H217, and E221.

It belongs to the GTP cyclohydrolase I type 2/NIF3 family. In terms of assembly, homohexamer.

This chain is GTP cyclohydrolase 1 type 2 homolog, found in Neisseria meningitidis serogroup B (strain ATCC BAA-335 / MC58).